The primary structure comprises 874 residues: Alanine--tRNA ligase (874 aa).

Residues histidine 562, histidine 566, cysteine 665, and histidine 669 each coordinate Zn(2+).

It belongs to the class-II aminoacyl-tRNA synthetase family. Requires Zn(2+) as cofactor.

The protein resides in the cytoplasm. The catalysed reaction is tRNA(Ala) + L-alanine + ATP = L-alanyl-tRNA(Ala) + AMP + diphosphate. Catalyzes the attachment of alanine to tRNA(Ala) in a two-step reaction: alanine is first activated by ATP to form Ala-AMP and then transferred to the acceptor end of tRNA(Ala). Also edits incorrectly charged Ser-tRNA(Ala) and Gly-tRNA(Ala) via its editing domain. This Pseudomonas entomophila (strain L48) protein is Alanine--tRNA ligase.